A 242-amino-acid chain; its full sequence is MSETILITGSSRGIGKAIALRLAQAGFDIVVHCRSRIEEAEAVAQAVRELGQNARVLQFDVSCRSEAADKLTADVEAHGAYYGVVLNAGLTRDNAFPALTDEDWDRVLRTNLDGFYNVLHPIMMPMIRRRKAGRIVCITSVSGLIGNRGQVNYSASKAGIIGAAKALAVELAKRKITVNCVAPGLIDTDILDENVPIDEILKMIPAGRMGDPEEVAHAVNFLMGEKAAYVTRQVIAVNGGLC.

NADP(+) is bound by residues 9 to 12 (GSSR), R34, 60 to 61 (DV), and N87. S140 provides a ligand contact to substrate. The active-site Proton acceptor is Y153. NADP(+) contacts are provided by residues 153-157 (YSASK) and I186.

It belongs to the short-chain dehydrogenases/reductases (SDR) family. In terms of assembly, homotetramer.

The catalysed reaction is a (3R)-hydroxyacyl-[ACP] + NADP(+) = a 3-oxoacyl-[ACP] + NADPH + H(+). It participates in lipid metabolism; fatty acid biosynthesis. Its function is as follows. Catalyzes the NADPH-dependent reduction of beta-ketoacyl-ACP substrates to beta-hydroxyacyl-ACP products, the first reductive step in the elongation cycle of fatty acid biosynthesis. The sequence is that of 3-oxoacyl-[acyl-carrier-protein] reductase FabG (fabG) from Aggregatibacter actinomycetemcomitans (Actinobacillus actinomycetemcomitans).